The chain runs to 546 residues: Cryptochrome DASH, chloroplastic/mitochondrial (546 aa).

Positions 4-151 (TRVVIWFRND…TMERHWGSTL (148 aa)) constitute a Photolyase/cryptochrome alpha/beta domain. Positions 497–546 (PRRDFTEMGSPPGPRRGGGGGGRGRGRPGGSTPNRGTKARVASVYDTVYG) are disordered. Over residues 511-525 (RRGGGGGGRGRGRPG) the composition is skewed to gly residues.

Belongs to the DNA photolyase class-1 family. It depends on FAD as a cofactor. Requires (6R)-5,10-methylene-5,6,7,8-tetrahydrofolate as cofactor.

It localises to the plastid. Its subcellular location is the chloroplast. The protein resides in the mitochondrion. Its function is as follows. May have a photoreceptor function. Binds ss- and ds-DNA in a sequence non-specific manner, lacks photolyase activity. In Ostreococcus tauri, this protein is Cryptochrome DASH, chloroplastic/mitochondrial.